A 147-amino-acid chain; its full sequence is E3 ubiquitin-protein ligase RNF181 homolog (147 aa).

An RING-type; atypical zinc finger spans residues 70–111 (CSVCKEPAEEGQKYRILPCKHEFHEECILLWLKKTNSCPLCR).

Belongs to the RNF181 family.

It carries out the reaction S-ubiquitinyl-[E2 ubiquitin-conjugating enzyme]-L-cysteine + [acceptor protein]-L-lysine = [E2 ubiquitin-conjugating enzyme]-L-cysteine + N(6)-ubiquitinyl-[acceptor protein]-L-lysine.. Its pathway is protein modification; protein ubiquitination. In terms of biological role, E3 ubiquitin-protein ligase which accepts ubiquitin from an E2 ubiquitin-conjugating enzyme in the form of a thioester and then directly transfers the ubiquitin to targeted substrates. The sequence is that of E3 ubiquitin-protein ligase RNF181 homolog from Drosophila melanogaster (Fruit fly).